Here is a 163-residue protein sequence, read N- to C-terminus: Glyoxalase domain-containing protein 5 (163 aa).

One can recognise a VOC domain in the interval 41-161; that stretch reads HLDHLVLTVR…DDNLIEVSNY (121 aa).

It belongs to the glyoxalase I family.

The protein is Glyoxalase domain-containing protein 5 (glod5) of Danio rerio (Zebrafish).